A 661-amino-acid chain; its full sequence is UvrABC system protein B (661 aa).

Residues 26-413 (KGINEGRKHQ…TPEMVEQIIR (388 aa)) enclose the Helicase ATP-binding domain. Position 39–46 (39–46 (GATGTGKT)) interacts with ATP. Residues 92–115 (YYDYYQPEAYVPQTDTFIEKDASI) carry the Beta-hairpin motif. Positions 430–596 (QIDDLIGEIQ…TINKKIRDVI (167 aa)) constitute a Helicase C-terminal domain. One can recognise a UVR domain in the interval 625-660 (EKVIAQMESDMKEAAKALDFERAAELRDLLLELKSE).

Belongs to the UvrB family. As to quaternary structure, forms a heterotetramer with UvrA during the search for lesions. Interacts with UvrC in an incision complex.

The protein localises to the cytoplasm. Functionally, the UvrABC repair system catalyzes the recognition and processing of DNA lesions. A damage recognition complex composed of 2 UvrA and 2 UvrB subunits scans DNA for abnormalities. Upon binding of the UvrA(2)B(2) complex to a putative damaged site, the DNA wraps around one UvrB monomer. DNA wrap is dependent on ATP binding by UvrB and probably causes local melting of the DNA helix, facilitating insertion of UvrB beta-hairpin between the DNA strands. Then UvrB probes one DNA strand for the presence of a lesion. If a lesion is found the UvrA subunits dissociate and the UvrB-DNA preincision complex is formed. This complex is subsequently bound by UvrC and the second UvrB is released. If no lesion is found, the DNA wraps around the other UvrB subunit that will check the other stand for damage. In Bacillus licheniformis (strain ATCC 14580 / DSM 13 / JCM 2505 / CCUG 7422 / NBRC 12200 / NCIMB 9375 / NCTC 10341 / NRRL NRS-1264 / Gibson 46), this protein is UvrABC system protein B.